The chain runs to 441 residues: Serine carboxypeptidase-like 4 (441 aa).

Residues 1–29 form the signal peptide; that stretch reads MANNNVYSVLKSLLLLLHLVFLSKQHVDS. 3 disulfide bridges follow: C88–C331, C252–C266, and C290–C297. N109 carries an N-linked (GlcNAc...) asparagine glycan. Residue S184 is part of the active site. Residue N350 is glycosylated (N-linked (GlcNAc...) asparagine). D366 is an active-site residue. An N-linked (GlcNAc...) asparagine glycan is attached at N382. H419 is a catalytic residue.

This sequence belongs to the peptidase S10 family. As to expression, ubiquitous.

It localises to the secreted. Its function is as follows. Probable carboxypeptidase. This chain is Serine carboxypeptidase-like 4 (SCPL4), found in Arabidopsis thaliana (Mouse-ear cress).